A 179-amino-acid polypeptide reads, in one-letter code: Large ribosomal subunit protein uL6 (179 aa).

The protein belongs to the universal ribosomal protein uL6 family. Part of the 50S ribosomal subunit.

This protein binds to the 23S rRNA, and is important in its secondary structure. It is located near the subunit interface in the base of the L7/L12 stalk, and near the tRNA binding site of the peptidyltransferase center. The chain is Large ribosomal subunit protein uL6 from Akkermansia muciniphila (strain ATCC BAA-835 / DSM 22959 / JCM 33894 / BCRC 81048 / CCUG 64013 / CIP 107961 / Muc).